The chain runs to 92 residues: Small ribosomal subunit protein uS19 (92 aa).

This sequence belongs to the universal ribosomal protein uS19 family.

Protein S19 forms a complex with S13 that binds strongly to the 16S ribosomal RNA. This is Small ribosomal subunit protein uS19 from Psychromonas ingrahamii (strain DSM 17664 / CCUG 51855 / 37).